Reading from the N-terminus, the 134-residue chain is Small ribosomal subunit protein uS8c (134 aa).

Belongs to the universal ribosomal protein uS8 family. As to quaternary structure, part of the 30S ribosomal subunit.

It is found in the plastid. The protein localises to the chloroplast. Functionally, one of the primary rRNA binding proteins, it binds directly to 16S rRNA central domain where it helps coordinate assembly of the platform of the 30S subunit. The sequence is that of Small ribosomal subunit protein uS8c (rps8) from Bigelowiella natans (Pedinomonas minutissima).